Here is a 622-residue protein sequence, read N- to C-terminus: Probable methionine--tRNA ligase, mitochondrial (622 aa).

The short motif at 67-79 is the 'HIGH' region element; sequence PIFYVNASPHVGH. A 'KMSKS' region motif is present at residues 366–370; sequence KMSKS. Position 369 (Lys-369) interacts with ATP. Residues 592-622 form a disordered region; sequence LDDIKGMGPDAGSKKHSSGNKPSSGNKKPTA. Residues 610 to 622 show a composition bias toward low complexity; that stretch reads GNKPSSGNKKPTA.

It belongs to the class-I aminoacyl-tRNA synthetase family.

Its subcellular location is the mitochondrion matrix. It carries out the reaction tRNA(Met) + L-methionine + ATP = L-methionyl-tRNA(Met) + AMP + diphosphate. The polypeptide is Probable methionine--tRNA ligase, mitochondrial (Neurospora crassa (strain ATCC 24698 / 74-OR23-1A / CBS 708.71 / DSM 1257 / FGSC 987)).